A 446-amino-acid chain; its full sequence is Exodeoxyribonuclease 7 large subunit (446 aa).

This sequence belongs to the XseA family. Heterooligomer composed of large and small subunits.

The protein localises to the cytoplasm. The catalysed reaction is Exonucleolytic cleavage in either 5'- to 3'- or 3'- to 5'-direction to yield nucleoside 5'-phosphates.. In terms of biological role, bidirectionally degrades single-stranded DNA into large acid-insoluble oligonucleotides, which are then degraded further into small acid-soluble oligonucleotides. The sequence is that of Exodeoxyribonuclease 7 large subunit from Shewanella denitrificans (strain OS217 / ATCC BAA-1090 / DSM 15013).